A 262-amino-acid polypeptide reads, in one-letter code: MKRIGIDAGGSLVKVAYEEHGKMHLKTYSSHKMEEVIQWLKTLSPYASFHITGGRSRELNLEGYRVYTIPEFKAIMEGTSYLLHQERKLPKSDYLLVNIGTGTSIFYNENRIAGTGIGGGLLTGLGELLTKESSYTQLIQMAKQGDRTKSDLMVRDIYKDSTSPIDETLTAANFGKVGLDPSNSKEDQMAALIQLIGETILLISHGAAQSVKTSQIVFIGGTLTNNQPLQRVFLHFQEQMNYTATFLNNGGHAGAIGAMLSS.

7 to 14 (DAGGSLVK) is an ATP binding site. Glutamate 71 acts as the Proton acceptor in catalysis. ATP is bound by residues threonine 101, 119–123 (GGLLT), and tyrosine 135.

It belongs to the type II pantothenate kinase family. In terms of assembly, homodimer.

The protein localises to the cytoplasm. It carries out the reaction (R)-pantothenate + ATP = (R)-4'-phosphopantothenate + ADP + H(+). It functions in the pathway cofactor biosynthesis; coenzyme A biosynthesis; CoA from (R)-pantothenate: step 1/5. Catalyzes the phosphorylation of pantothenate (Pan), the first step in CoA biosynthesis. This is Type II pantothenate kinase from Oceanobacillus iheyensis (strain DSM 14371 / CIP 107618 / JCM 11309 / KCTC 3954 / HTE831).